The chain runs to 425 residues: Isocitrate dehydrogenase [NADP] (425 aa).

Thr-114 lines the NADP(+) pocket. 5 residues coordinate D-threo-isocitrate: Ser-123, Asn-125, Arg-129, Arg-139, and Arg-162. Position 316 (Asp-316) interacts with Mg(2+). NADP(+) is bound by residues 348-354, Asn-361, Tyr-400, and Arg-404; that span reads HGTAPKY.

This sequence belongs to the isocitrate and isopropylmalate dehydrogenases family. As to quaternary structure, homodimer. Mg(2+) serves as cofactor. Requires Mn(2+) as cofactor.

The catalysed reaction is D-threo-isocitrate + NADP(+) = 2-oxoglutarate + CO2 + NADPH. Its function is as follows. Catalyzes the oxidative decarboxylation of isocitrate to 2-oxoglutarate and carbon dioxide with the concomitant reduction of NADP(+). The sequence is that of Isocitrate dehydrogenase [NADP] (icd) from Helicobacter pylori (strain ATCC 700392 / 26695) (Campylobacter pylori).